Consider the following 414-residue polypeptide: MLTEKSPIHVNSEIGRLKTVILHRPGKEIENLTPDTMGPLLFDDIPYLLLAQKEHDNFADTLRKKGVEVLYLERLVVQALETDEQVKAFFIDKMIAESGFKSGTIHAQLQKFLVGLPTNEMVDKIMAGVRFDEIELASKDLQNFSFDRTRPFLMAPMPNLYFTRDPSASIGDGLTINRMTFKARRRESMFTELVINHHPRFANKNINVWRDRNHVARLEGGDELVLSDHVLAIGLSQRTSSEAIKDVAKNLFAGSNYDTVIAIQIPQTHATMHLDTVFTMVNFDQFTVHPMILNNKGELPILVMHKDKQNQIKIESSNNLKTVLKEQLGLNELDLISTGDGDPIISAREQWNDGSNTLAIAPGSVVTYDRNYVSNEALRKHGIQVSEVPSSEISRGRGGPRCMSMPIYREDIEK.

Cysteine 402 acts as the Amidino-cysteine intermediate in catalysis.

Belongs to the arginine deiminase family.

Its subcellular location is the cytoplasm. It carries out the reaction L-arginine + H2O = L-citrulline + NH4(+). It participates in amino-acid degradation; L-arginine degradation via ADI pathway; carbamoyl phosphate from L-arginine: step 1/2. This chain is Arginine deiminase, found in Oenococcus oeni (strain ATCC BAA-331 / PSU-1).